The following is a 106-amino-acid chain: SH3 domain-binding glutamic acid-rich-like protein 2 (106 aa).

The SH3-binding signature appears at 61-67; it reads QGNPLPP.

It belongs to the SH3BGR family.

Its subcellular location is the nucleus. The protein is SH3 domain-binding glutamic acid-rich-like protein 2 (sh3bgrl2) of Xenopus tropicalis (Western clawed frog).